The sequence spans 419 residues: Ribosome biogenesis protein WDR12 homolog (419 aa).

Residues 10-91 (VQVHLKTKQE…EDSIEIEYVE (82 aa)) are ubiquitin-like (UBL) domain. WD repeat units lie at residues 103–140 (LHDD…KLTI), 142–184 (GHTA…NAVE), 191–230 (GHER…AGES), 249–287 (GHRE…IKTE), 289–328 (STNK…GSVV), 334–374 (GHNA…APLY), and 378–416 (GHGE…VENM).

It belongs to the WD repeat WDR12/YTM1 family.

The protein resides in the nucleus. It is found in the nucleolus. Its subcellular location is the nucleoplasm. Required for maturation of ribosomal RNAs and formation of the large ribosomal subunit. This Drosophila mojavensis (Fruit fly) protein is Ribosome biogenesis protein WDR12 homolog.